The sequence spans 229 residues: MDRPAVVLLSGGLDSTTVLAIAKSQGFTPYALSFAYGQRHAVELDAARRVATALGAAGHVIATIDLTVFGGSALTADIAVPKHDTVEDLQADIPITYVPARNTIFLSYALAYAEVVGAGDIFIGVNALDYSGYPDCRPEYVDAFQAMGRLATRAGVQGTELTIHAPLMQMTKADIVRAGLALGVDYGMTSSCYDPDAAGHPCGHCDSCLLRLNGFAEAGSTDPLPYRGA.

9-19 is an ATP binding site; it reads LSGGLDSTTVL. The Zn(2+) site is built by C192, C202, C205, and C208.

It belongs to the QueC family. Requires Zn(2+) as cofactor.

The enzyme catalyses 7-carboxy-7-deazaguanine + NH4(+) + ATP = 7-cyano-7-deazaguanine + ADP + phosphate + H2O + H(+). It participates in purine metabolism; 7-cyano-7-deazaguanine biosynthesis. Functionally, catalyzes the ATP-dependent conversion of 7-carboxy-7-deazaguanine (CDG) to 7-cyano-7-deazaguanine (preQ(0)). This chain is 7-cyano-7-deazaguanine synthase, found in Kineococcus radiotolerans (strain ATCC BAA-149 / DSM 14245 / SRS30216).